A 442-amino-acid chain; its full sequence is Choline monooxygenase, chloroplastic (442 aa).

Residues 1–58 (MASSASMLINYPTTFCGVRNSSNPNNDQFSDQINIPSSLNNNINISKITSKTNKIIPK) constitute a chloroplast transit peptide. A Rieske domain is found at 123 to 229 (WQVAGYSDQI…VAIWGPFVLI (107 aa)). Residues C165, H167, C184, and H187 each coordinate [2Fe-2S] cluster. 2 residues coordinate Fe cation: H290 and H295.

Belongs to the choline monooxygenase family. [2Fe-2S] cluster is required as a cofactor. It depends on Fe cation as a cofactor. Mg(2+) serves as cofactor.

The protein resides in the plastid. It is found in the chloroplast stroma. The catalysed reaction is choline + 2 reduced [2Fe-2S]-[ferredoxin] + O2 + 2 H(+) = betaine aldehyde hydrate + 2 oxidized [2Fe-2S]-[ferredoxin] + H2O. It functions in the pathway amine and polyamine biosynthesis; betaine biosynthesis via choline pathway; betaine aldehyde from choline (monooxygenase route): step 1/1. Functionally, catalyzes the first step of the osmoprotectant glycine betaine synthesis. The polypeptide is Choline monooxygenase, chloroplastic (CMO) (Amaranthus tricolor (Joseph's coat)).